A 239-amino-acid polypeptide reads, in one-letter code: Sugar fermentation stimulation protein homolog (239 aa).

The protein belongs to the SfsA family.

This chain is Sugar fermentation stimulation protein homolog, found in Microcystis aeruginosa (strain NIES-843 / IAM M-2473).